The sequence spans 83 residues: Putative membrane protein insertion efficiency factor (83 aa).

Residues 62–83 (KGGYDPVPPKSVKSAGNSKDSK) are disordered.

Belongs to the UPF0161 family.

The protein localises to the cell inner membrane. Could be involved in insertion of integral membrane proteins into the membrane. The chain is Putative membrane protein insertion efficiency factor from Chlorobaculum tepidum (strain ATCC 49652 / DSM 12025 / NBRC 103806 / TLS) (Chlorobium tepidum).